The following is an 85-amino-acid chain: MKLLLLLTISASMLIEGLVNADGYIRGGDGCKVSCVINHVFCDNECKAAGGSYGYCWAWGLACWCEGLPAEREWDYETNTCGGKK.

Positions 1–21 are cleaved as a signal peptide; the sequence is MKLLLLLTISASMLIEGLVNA. Residues 22–82 enclose the LCN-type CS-alpha/beta domain; sequence DGYIRGGDGC…EWDYETNTCG (61 aa). 4 disulfides stabilise this stretch: C31-C81, C35-C56, C42-C63, and C46-C65. At G82 the chain carries Glycine amide.

The protein belongs to the long (4 C-C) scorpion toxin superfamily. Sodium channel inhibitor family. Beta subfamily. As to expression, expressed by the venom gland.

It is found in the secreted. Functionally, depressant insect beta-toxins cause a transient contraction paralysis followed by a slow flaccid paralysis. They bind voltage-independently at site-4 of sodium channels (Nav) and block action potentials, primarily by depolarizing the axonal membrane and suppressing the sodium current. This depressant toxin is active only on insects. It is found in a relatively small amount in the venom, and its activity on insects is 10-fold higher compared to other known depressant toxins. The chain is Beta-insect depressant toxin Lqh-dprIT3c from Leiurus hebraeus (Hebrew deathstalker scorpion).